Consider the following 265-residue polypeptide: MNMSVLTLQEYEFEKQFNENEAIQWMQENWKKSFLFSALYAAFIFGGRHLMNKRAKFELRKPLVLWSLTLAVFSIFGALRTGAYMVYILMTKGLKQSVCDQGFYNGPVSKFWAYAFVLSKAPELGDTIFIILRKQKLIFLHWYHHITVLLYSWYSYKDMVAGGGWFMTMNYGVHAVMYSYYALRAAGFRVSRKFAMFITLSQITQMLMGCVVNYLVFCWMQHDQCHSHFQNIFWSSLMYLSYLVLFCHFFFEAYIGKMRKTTKAE.

N-linked (GlcNAc...) asparagine glycosylation occurs at Asn-2. Transmembrane regions (helical) follow at residues 34–51 (FLFS…RHLM), 70–90 (LAVF…YILM), 111–131 (FWAY…IFII), 136–156 (KLIF…WYSY), 159–179 (MVAG…VMYS), 197–217 (FITL…YLVF), and 232–252 (IFWS…FFFE).

Belongs to the ELO family. ELOVL6 subfamily. In terms of processing, N-Glycosylated. In terms of tissue distribution, ubiquitous.

The protein localises to the endoplasmic reticulum membrane. The enzyme catalyses a very-long-chain acyl-CoA + malonyl-CoA + H(+) = a very-long-chain 3-oxoacyl-CoA + CO2 + CoA. The catalysed reaction is hexadecanoyl-CoA + malonyl-CoA + H(+) = 3-oxooctadecanoyl-CoA + CO2 + CoA. It carries out the reaction (9Z)-hexadecenoyl-CoA + malonyl-CoA + H(+) = 3-oxo-(11Z)-octadecenoyl-CoA + CO2 + CoA. It catalyses the reaction dodecanoyl-CoA + malonyl-CoA + H(+) = 3-oxotetradecanoyl-CoA + CO2 + CoA. The enzyme catalyses tetradecanoyl-CoA + malonyl-CoA + H(+) = 3-oxohexadecanoyl-CoA + CO2 + CoA. The catalysed reaction is (9Z)-octadecenoyl-CoA + malonyl-CoA + H(+) = 3-oxo-(11Z)-eicosenoyl-CoA + CO2 + CoA. It carries out the reaction (9Z,12Z)-octadecadienoyl-CoA + malonyl-CoA + H(+) = (11Z,14Z)-3-oxoicosa-11,14-dienoyl-CoA + CO2 + CoA. It catalyses the reaction (9Z,12Z,15Z)-octadecatrienoyl-CoA + malonyl-CoA + H(+) = (11Z,14Z,17Z)-3-oxoeicosatrienoyl-CoA + CO2 + CoA. Its pathway is lipid metabolism; fatty acid biosynthesis. Its activity is regulated as follows. The reaction is stimulated by the presence of HSD17B12, the enzyme catalyzing the second step of the elongation cycle. In terms of biological role, catalyzes the first and rate-limiting reaction of the four reactions that constitute the long-chain fatty acids elongation cycle. This endoplasmic reticulum-bound enzymatic process allows the addition of 2 carbons to the chain of long- and very long-chain fatty acids (VLCFAs) per cycle. Condensing enzyme that elongates fatty acids with 12, 14 and 16 carbons with higher activity toward C16:0 acyl-CoAs. Catalyzes the synthesis of unsaturated C16 long chain fatty acids and, to a lesser extent, C18:0 and those with low desaturation degree. May participate in the production of saturated and monounsaturated VLCFAs of different chain lengths that are involved in multiple biological processes as precursors of membrane lipids and lipid mediators. This chain is Very long chain fatty acid elongase 6, found in Homo sapiens (Human).